A 361-amino-acid chain; its full sequence is Replication-associated protein (361 aa).

The CRESS-DNA virus Rep endonuclease domain maps to 8–116 (RVQSKNYFLT…DGDTIEWGDF (109 aa)). Positions 15-18 (FLTY) match the RCR-1 motif. Residues Glu49, His57, and His59 each contribute to the a divalent metal cation site. Positions 57-59 (HLH) match the RCR-2 motif. Tyr103 (for DNA cleavage activity) is an active-site residue. Positions 103–106 (YIDK) match the RCR-3 motif. Asp107 is an a divalent metal cation binding site. Residues 143-153 (VQSALAVLREE) are binding to RBR1. Residues 156–176 (KDFVLQNHNIRSNLERIFAKA) form an oligomerization region. Residue 222 to 229 (GDSRTGKT) coordinates ATP.

It belongs to the geminiviridae Rep protein family. In terms of assembly, homooligomer. Interacts with the replication enhancer. protein (REn). Interacts with host retinoblastoma-related protein 1 (RBR1), and may thereby induce the transcription of host replicative enzymes even if the cell is not dividing anymore. Interacts with host PCNA. Interacts with host SCE1 protein. It depends on Mg(2+) as a cofactor. Mn(2+) serves as cofactor.

The protein localises to the host nucleus. Essential for the replication of viral ssDNA. The closed circular ssDNA genome is first converted to a superhelical dsDNA. Rep binds a specific region at the genome origin of replication. It introduces an endonucleolytic nick within the conserved sequence 5'-TAATATTAC-3' in the intergenic region of the genome present in all geminiviruses, thereby initiating the rolling circle replication (RCR). Following cleavage, binds covalently to the 5'-phosphate of DNA as a tyrosyl ester. The cleavage gives rise to a free 3'-OH that serves as a primer for the cellular DNA polymerase. The polymerase synthesizes the (+) strand DNA by rolling circle mechanism. After one round of replication, a Rep-catalyzed nucleotidyl transfer reaction releases a circular single-stranded virus genome, thereby terminating the replication. Displays origin-specific DNA cleavage, nucleotidyl transferase, ATPase and helicase activities. In Nicotiana tabacum (Common tobacco), this protein is Replication-associated protein.